Consider the following 182-residue polypeptide: Translation initiation factor IF-3 (182 aa).

The segment at 1-22 (MPLGDCNISTPDNKQNRKNQEI) is disordered.

This sequence belongs to the IF-3 family. As to quaternary structure, monomer.

Its subcellular location is the cytoplasm. Its function is as follows. IF-3 binds to the 30S ribosomal subunit and shifts the equilibrium between 70S ribosomes and their 50S and 30S subunits in favor of the free subunits, thus enhancing the availability of 30S subunits on which protein synthesis initiation begins. This Xanthomonas campestris pv. campestris (strain ATCC 33913 / DSM 3586 / NCPPB 528 / LMG 568 / P 25) protein is Translation initiation factor IF-3.